The following is a 293-amino-acid chain: Small ribosomal subunit protein uS2 (293 aa).

The tract at residues 265–293 (DGGDWAASSAPAPGGENWAEAQPAEGAKW) is disordered.

It belongs to the universal ribosomal protein uS2 family. As to quaternary structure, component of the small ribosomal subunit. Mature ribosomes consist of a small (40S) and a large (60S) subunit. The 40S subunit contains about 33 different proteins and 1 molecule of RNA (18S). The 60S subunit contains about 49 different proteins and 3 molecules of RNA (25S, 5.8S and 5S). Interacts with rps21.

The protein resides in the cytoplasm. In terms of biological role, required for the assembly and/or stability of the 40S ribosomal subunit. Required for the processing of the 20S rRNA-precursor to mature 18S rRNA in a late step of the maturation of 40S ribosomal subunits. The chain is Small ribosomal subunit protein uS2 (rps0) from Emericella nidulans (strain FGSC A4 / ATCC 38163 / CBS 112.46 / NRRL 194 / M139) (Aspergillus nidulans).